Reading from the N-terminus, the 407-residue chain is Putative D-cysteine desulfhydrase 2, mitochondrial (407 aa).

The transit peptide at 1–34 (MRPSPALAGGGRTVANLLSATEWMLPSPATQVHT) directs the protein to the mitochondrion. The disordered stretch occupies residues 39-72 (PSHSPPSPPHHFAFSNLTTAPKRNGGKGEEEGRP). Lysine 90 is modified (N6-(pyridoxal phosphate)lysine).

This sequence belongs to the ACC deaminase/D-cysteine desulfhydrase family. It depends on pyridoxal 5'-phosphate as a cofactor.

Its subcellular location is the mitochondrion. It carries out the reaction D-cysteine + H2O = hydrogen sulfide + pyruvate + NH4(+) + H(+). In terms of biological role, catalyzes the production of hydrogen sulfide (H2S) from cysteine. This Oryza sativa subsp. japonica (Rice) protein is Putative D-cysteine desulfhydrase 2, mitochondrial.